Reading from the N-terminus, the 479-residue chain is Cardiolipin synthase A (479 aa).

2 consecutive transmembrane segments (helical) span residues 8–28 and 38–58; these read FFGY…LHAL and IAWA…YLIF. PLD phosphodiesterase domains lie at 218–245 and 392–419; these read VNFR…GDEY and QPGF…DNRS. Catalysis depends on residues histidine 223, lysine 225, aspartate 230, histidine 397, lysine 399, and aspartate 404.

This sequence belongs to the phospholipase D family. Cardiolipin synthase subfamily. ClsA sub-subfamily.

The protein localises to the cell inner membrane. The enzyme catalyses 2 a 1,2-diacyl-sn-glycero-3-phospho-(1'-sn-glycerol) = a cardiolipin + glycerol. Catalyzes the reversible phosphatidyl group transfer from one phosphatidylglycerol molecule to another to form cardiolipin (CL) (diphosphatidylglycerol) and glycerol. The chain is Cardiolipin synthase A from Pseudomonas putida (strain ATCC 700007 / DSM 6899 / JCM 31910 / BCRC 17059 / LMG 24140 / F1).